Here is a 688-residue protein sequence, read N- to C-terminus: PHD finger protein 21A (688 aa).

Residue lysine 65 forms a Glycyl lysine isopeptide (Lys-Gly) (interchain with G-Cter in SUMO2) linkage. Disordered stretches follow at residues 78–127 and 327–373; these read SQSE…LTAS and PQTV…ENPQ. Residues 85–127 show a composition bias toward low complexity; it reads QTAQQQPLQPLQQQQPQQPQQQQQQQQQHAQQSAAAPPSLTAS. The span at 336–354 shows a compositional bias: basic and acidic residues; that stretch reads SLEKQTVKSHPEAEEKQAE. Residues 434–446 constitute a DNA-binding region (a.T hook); that stretch reads TRKRGRPPKYNAV. Positions 449 to 471 are disordered; it reads FGALTPTSPPSSHPDSPENEKTE. Threonine 453 is subject to Phosphothreonine. At serine 456 the chain carries Phosphoserine. The PHD-type zinc-finger motif lies at 497–544; it reads EDFCSVCRKSGQLLMCDTCSRVYHLDCLEPPLKTIPKGMWICPRCQDQ. The stretch at 571 to 609 forms a coiled coil; it reads KEEEKQKLLKWSSDLKQEREQLEQKVKELSSSISKCMEM. The segment at 650-688 is disordered; it reads GALSNGPDCTPPANAASTPAPSPSSQSCTANCNQGEETK. Over residues 660 to 679 the composition is skewed to low complexity; sequence PPANAASTPAPSPSSQSCTA.

In terms of assembly, component of a BHC histone deacetylase complex that contains HDAC1, HDAC2, HMG20B/BRAF35, KDM1A, RCOR1/CoREST and PHF21A/BHC80. The BHC complex may also contain ZMYM2, ZNF217, ZMYM3, GSE1 and GTF2I. In the complex, it interacts directly with HDAC1, HDAC2, HMG20B/BRAF35, KDM1A and RCOR1/CoREST. As to expression, expressed in the brain and testis. Weakly or not expressed in other tissues tested. Localized throughout the central nervous system (CNS) in brain, including the cerebellum, hippocampus, and cortex. Notably present in neuronal cells of granular cell layer and dentate gyrus in cerebellum and hippocampus, respectively. In the seminiferous tubules, the signals it is present strongly in spermatocytes, and weakly in spermatogonia and round spermatids. In some cases, it is also observed solely in spermatocytes (at protein level).

It localises to the nucleus. Its function is as follows. Component of the BHC complex, a corepressor complex that represses transcription of neuron-specific genes in non-neuronal cells. The BHC complex is recruited at RE1/NRSE sites by REST and acts by deacetylating and demethylating specific sites on histones, thereby acting as a chromatin modifier. In the BHC complex, it may act as a scaffold. Inhibits KDM1A-mediated demethylation of 'Lys-4' of histone H3 in vitro, suggesting a role in demethylation regulation. This is PHD finger protein 21A from Mus musculus (Mouse).